The primary structure comprises 364 residues: Uroporphyrinogen decarboxylase (364 aa).

Residues 28–32 (RQAGR), Asp78, Tyr160, Thr215, and His333 each bind substrate.

This sequence belongs to the uroporphyrinogen decarboxylase family. Homodimer.

The protein localises to the cytoplasm. The catalysed reaction is uroporphyrinogen III + 4 H(+) = coproporphyrinogen III + 4 CO2. It functions in the pathway porphyrin-containing compound metabolism; protoporphyrin-IX biosynthesis; coproporphyrinogen-III from 5-aminolevulinate: step 4/4. In terms of biological role, catalyzes the decarboxylation of four acetate groups of uroporphyrinogen-III to yield coproporphyrinogen-III. The protein is Uroporphyrinogen decarboxylase of Burkholderia thailandensis (strain ATCC 700388 / DSM 13276 / CCUG 48851 / CIP 106301 / E264).